The primary structure comprises 395 residues: uncharacterized protein (395 aa).

Positions 182–238 (KKLEDILSTIAEIEDSIELEKILSLDQFLKSKLSNIKITNNQIDEAKAEFKEMFNKK) form a coiled coil.

This is an uncharacterized protein from Acanthamoeba polyphaga (Amoeba).